Here is a 189-residue protein sequence, read N- to C-terminus: Putative nucleotidase BC_3386 (189 aa).

Belongs to the 5'(3')-deoxyribonucleotidase family.

In Bacillus cereus (strain ATCC 14579 / DSM 31 / CCUG 7414 / JCM 2152 / NBRC 15305 / NCIMB 9373 / NCTC 2599 / NRRL B-3711), this protein is Putative nucleotidase BC_3386.